We begin with the raw amino-acid sequence, 120 residues long: Large ribosomal subunit protein bL12 (120 aa).

This sequence belongs to the bacterial ribosomal protein bL12 family. As to quaternary structure, homodimer. Part of the ribosomal stalk of the 50S ribosomal subunit. Forms a multimeric L10(L12)X complex, where L10 forms an elongated spine to which 2 to 4 L12 dimers bind in a sequential fashion. Binds GTP-bound translation factors.

Functionally, forms part of the ribosomal stalk which helps the ribosome interact with GTP-bound translation factors. Is thus essential for accurate translation. In Aeromonas salmonicida (strain A449), this protein is Large ribosomal subunit protein bL12.